Here is a 681-residue protein sequence, read N- to C-terminus: Envelope glycoprotein (681 aa).

The N-terminal stretch at 1-18 (MKTTCFLISLILIQGTKN) is a signal peptide. The Extracellular segment spans residues 19–648 (LPILEIASNN…GLGGKWWTSD (630 aa)). 5 cysteine pairs are disulfide-bonded: cysteine 37-cysteine 610, cysteine 92-cysteine 119, cysteine 211-cysteine 226, cysteine 512-cysteine 557, and cysteine 602-cysteine 609. The segment at 38-188 (SGTLQKTEDV…FSRQGQGYRH (151 aa)) is receptor-binding. 8 N-linked (GlcNAc...) asparagine; by host glycosylation sites follow: asparagine 94, asparagine 171, asparagine 190, asparagine 202, asparagine 207, asparagine 219, asparagine 223, and asparagine 255. Residues 223 to 427 (NQTCAPSKIP…PPTPSSTAQH (205 aa)) are disordered. 3 stretches are compositionally biased toward polar residues: residues 244 to 259 (LTSTPTDATKLNTTDP), 281 to 290 (TSDAVTKQGL), and 308 to 318 (GGNNTNHSQDA). The segment at 277-455 (EPHTTSDAVT…PFLDGLINAP (179 aa)) is mucin-like region. 11 N-linked (GlcNAc...) asparagine; by host glycosylation sites follow: asparagine 310, asparagine 313, asparagine 325, asparagine 326, asparagine 337, asparagine 344, asparagine 345, asparagine 350, asparagine 360, asparagine 408, and asparagine 487. The span at 337–347 (NTTTISTNNTS) shows a compositional bias: low complexity. Residues 348 to 414 (KHNFSTLSAP…TAPNTTNEHF (67 aa)) are compositionally biased toward polar residues. Positions 529-549 (GLSWIPFFGPGIEGLYTAVLI) are fusion peptide. Residue asparagine 564 is glycosylated (N-linked (GlcNAc...) asparagine; by host). Residue asparagine 619 is glycosylated (N-linked (GlcNAc...) asparagine; by host). Residues 649-669 (WGVLTNLGILLLLSIAVLIAL) traverse the membrane as a helical segment. Topologically, residues 670 to 681 (SCICRIFTKYIG) are cytoplasmic. S-palmitoyl cysteine; by host attachment occurs at residues cysteine 671 and cysteine 673.

It belongs to the filoviruses glycoprotein family. As to quaternary structure, homotrimer; each monomer consists of a GP1 and a GP2 subunit linked by disulfide bonds. The resulting peplomers (GP1,2) protrude from the virus surface as spikes. GP1,2 interacts with human CD209 and CLEC4M (collectively referred to as DC-SIGN(R)). Asialoglycoprotein receptor (ASGP-R) may be a liver-specific receptor for GP1,2. Members of the Tyro3 receptor tyrosine kinase family may be cell entry factors interacting with GP1,2. N-glycosylated. Post-translationally, O-glycosylated in the mucin-like region. In terms of processing, specific enzymatic cleavages in vivo yield mature proteins. The precursor is processed into GP1 and GP2 by host cell furin in the trans Golgi, and maybe by other host proteases, to yield the mature GP1 and GP2 proteins. The cleavage site corresponds to the furin optimal cleavage sequence [KR]-X-[KR]-R. GP1 is phosphorylated on serine residues between residues 260 and 273.

The protein resides in the virion membrane. It localises to the host cell membrane. Its function is as follows. GP1 is responsible for binding to the receptor(s) on target cells. Interacts with CD209/DC-SIGN and CLEC4M/DC-SIGNR which act as cofactors for virus entry into the host cell. Binding to CD209 and CLEC4M, which are respectively found on dendritic cells (DCs), and on endothelial cells of liver sinusoids and lymph node sinuses, facilitate infection of macrophages and endothelial cells. These interactions not only facilitate virus cell entry, but also allow capture of viral particles by DCs and subsequent transmission to susceptible cells without DCs infection (trans infection). GP2 acts as a class I viral fusion protein. Under the current model, the protein has at least 3 conformational states: pre-fusion native state, pre-hairpin intermediate state, and post-fusion hairpin state. During viral and target cell membrane fusion, the coiled coil regions (heptad repeats) assume a trimer-of-hairpins structure, positioning the fusion peptide in close proximity to the C-terminal region of the ectodomain. The formation of this structure appears to drive apposition and subsequent fusion of viral and target cell membranes. Responsible for penetration of the virus into the cell cytoplasm by mediating the fusion of the membrane of the endocytosed virus particle with the endosomal membrane. Low pH in endosomes induces an irreversible conformational change in GP2, releasing the fusion hydrophobic peptide. The protein is Envelope glycoprotein (GP) of Lake Victoria marburgvirus (strain Musoke-80) (MARV).